Consider the following 295-residue polypeptide: GTPase Era (295 aa).

Positions 7 to 176 (KTVSVCIIGR…ITSKAKIAPW (170 aa)) constitute an Era-type G domain. A G1 region spans residues 15 to 22 (GRPNSGKS). Position 15–22 (15–22 (GRPNSGKS)) interacts with GTP. The G2 stretch occupies residues 41-45 (QTTRS). Residues 62–65 (DTPG) form a G3 region. GTP-binding positions include 62–66 (DTPGI) and 124–127 (NKID). Positions 124–127 (NKID) are G4. A G5 region spans residues 152-154 (ISA). The region spanning 204-281 (LQQELPYKLT…HLFLFVKVRE (78 aa)) is the KH type-2 domain.

This sequence belongs to the TRAFAC class TrmE-Era-EngA-EngB-Septin-like GTPase superfamily. Era GTPase family. Monomer.

It localises to the cytoplasm. The protein localises to the cell inner membrane. In terms of biological role, an essential GTPase that binds both GDP and GTP, with rapid nucleotide exchange. Plays a role in 16S rRNA processing and 30S ribosomal subunit biogenesis and possibly also in cell cycle regulation and energy metabolism. This Rickettsia bellii (strain OSU 85-389) protein is GTPase Era.